The sequence spans 138 residues: Acidic phospholipase A2 Tpu-E6a (138 aa).

Residues 1-16 form the signal peptide; that stretch reads MRTLWIMAVLLLGVKG. Cystine bridges form between Cys-42–Cys-131, Cys-44–Cys-60, Cys-59–Cys-111, Cys-65–Cys-138, Cys-66–Cys-104, Cys-73–Cys-97, and Cys-91–Cys-102. Residues Tyr-43, Gly-45, and Gly-47 each contribute to the Ca(2+) site. His-63 is a catalytic residue. Asp-64 is a Ca(2+) binding site. The active site involves Asp-105.

Monomer. Ca(2+) serves as cofactor. In terms of tissue distribution, expressed by the venom gland.

The protein resides in the secreted. It carries out the reaction a 1,2-diacyl-sn-glycero-3-phosphocholine + H2O = a 1-acyl-sn-glycero-3-phosphocholine + a fatty acid + H(+). Snake venom phospholipase A2 (PLA2) that impairs hemostasis. It weakly inhibits ADP-induced platelet aggregation when tested on platelet rich plasma from human and rabbit blood (15-25% of inhibition at 5-10 ug of enzyme), and dose-dependently inhibits blood coagulation, possibly by inhibiting thrombin activation. Exhibits high hydrolytic activities toward L-dipalmitoyl phosphatidylcholine. PLA2 catalyzes the calcium-dependent hydrolysis of the 2-acyl groups in 3-sn-phosphoglycerides. This chain is Acidic phospholipase A2 Tpu-E6a, found in Craspedocephalus puniceus (Flat-nosed pitviper).